The primary structure comprises 125 residues: Protein ApaG (125 aa).

The region spanning 3–125 is the ApaG domain; sequence TAVTEGIEVT…FPLVVPGSLN (123 aa).

This is Protein ApaG from Anaeromyxobacter dehalogenans (strain 2CP-1 / ATCC BAA-258).